Here is a 1067-residue protein sequence, read N- to C-terminus: Isoleucine--tRNA ligase (1067 aa).

Positions 49–59 (PYVSGAIHLGT) match the 'HIGH' region motif. Positions 625–629 (KMSKS) match the 'KMSKS' region motif. Lys-628 contributes to the ATP binding site.

The protein belongs to the class-I aminoacyl-tRNA synthetase family. IleS type 2 subfamily. As to quaternary structure, monomer. The cofactor is Zn(2+).

Its subcellular location is the cytoplasm. The catalysed reaction is tRNA(Ile) + L-isoleucine + ATP = L-isoleucyl-tRNA(Ile) + AMP + diphosphate. Functionally, catalyzes the attachment of isoleucine to tRNA(Ile). As IleRS can inadvertently accommodate and process structurally similar amino acids such as valine, to avoid such errors it has two additional distinct tRNA(Ile)-dependent editing activities. One activity is designated as 'pretransfer' editing and involves the hydrolysis of activated Val-AMP. The other activity is designated 'posttransfer' editing and involves deacylation of mischarged Val-tRNA(Ile). The polypeptide is Isoleucine--tRNA ligase (Pyrococcus abyssi (strain GE5 / Orsay)).